We begin with the raw amino-acid sequence, 98 residues long: Integration host factor subunit alpha (98 aa).

Residues 53–69 (DLREKSERPGRNPKTGE) show a composition bias toward basic and acidic residues. The interval 53–73 (DLREKSERPGRNPKTGEDIPI) is disordered.

The protein belongs to the bacterial histone-like protein family. As to quaternary structure, heterodimer of an alpha and a beta chain.

Its function is as follows. This protein is one of the two subunits of integration host factor, a specific DNA-binding protein that functions in genetic recombination as well as in transcriptional and translational control. The polypeptide is Integration host factor subunit alpha (Aliivibrio fischeri (strain ATCC 700601 / ES114) (Vibrio fischeri)).